Consider the following 434-residue polypeptide: Tol-Pal system protein TolB (434 aa).

The signal sequence occupies residues 1–21 (MTVRRALALAALALAVSPALA). Residues 411 to 434 (GDRQTPVTSGKTDLAAPAWGPLAP) form a disordered region.

This sequence belongs to the TolB family. As to quaternary structure, the Tol-Pal system is composed of five core proteins: the inner membrane proteins TolA, TolQ and TolR, the periplasmic protein TolB and the outer membrane protein Pal. They form a network linking the inner and outer membranes and the peptidoglycan layer.

Its subcellular location is the periplasm. Its function is as follows. Part of the Tol-Pal system, which plays a role in outer membrane invagination during cell division and is important for maintaining outer membrane integrity. The chain is Tol-Pal system protein TolB from Anaeromyxobacter dehalogenans (strain 2CP-1 / ATCC BAA-258).